Consider the following 141-residue polypeptide: Thioredoxin-like protein SkfH (141 aa).

The Thioredoxin domain maps to Lys2–Leu141. Cys41 and Cys44 are joined by a disulfide.

Functionally, required for production of the bacteriocin SkfA. This is Thioredoxin-like protein SkfH from Bacillus subtilis (strain 168).